A 335-amino-acid chain; its full sequence is Ubiquinone biosynthesis protein COQ4, mitochondrial (335 aa).

The transit peptide at methionine 1 to threonine 10 directs the protein to the mitochondrion. Residues histidine 210, aspartate 211, histidine 214, and glutamate 226 each coordinate Zn(2+).

Belongs to the COQ4 family. Component of a multi-subunit COQ enzyme complex, composed of at least COQ3, COQ4, COQ5, COQ6, COQ7 and COQ9. Interacts with COQ3. It depends on Zn(2+) as a cofactor.

It localises to the mitochondrion inner membrane. The catalysed reaction is 4-hydroxy-3-methoxy-5-(all-trans-hexaprenyl)benzoate + H(+) = 2-methoxy-6-(all-trans-hexaprenyl)phenol + CO2. It participates in cofactor biosynthesis; ubiquinone biosynthesis. Lyase that catalyzes the C1-decarboxylation of 4-hydroxy-3-methoxy-5-(all-trans-hexaprenyl)benzoic acid into 2-methoxy-6-(all-trans-hexaprenyl)phenol during ubiquinone biosynthesis. The chain is Ubiquinone biosynthesis protein COQ4, mitochondrial from Saccharomyces cerevisiae (strain AWRI1631) (Baker's yeast).